Consider the following 167-residue polypeptide: Disulfide bond formation protein B (167 aa).

The Cytoplasmic portion of the chain corresponds to 1-12 (MFLNLLDAPRRL). A helical transmembrane segment spans residues 13–29 (LALVALGCVALLAFGLY). Residues 30–47 (LQHVVGLEPCPMCIVQRY) lie on the Periplasmic side of the membrane. C39 and C42 are disulfide-bonded. The helical transmembrane segment at 48-63 (ALVLVAIVAGLTAITS) threads the bilayer. The Cytoplasmic segment spans residues 64 to 69 (NKKGLI). The helical transmembrane segment at 70-87 (TGSGVLLLLAGFGAFVAA) threads the bilayer. Over 88–143 (RQSFLQWYPPEVASCGRDFYGMIETFPLQRAIPMIFKGSGDCAKVDWTFLGGSIAN) the chain is Periplasmic. C102 and C129 are disulfide-bonded. Residues 144–162 (WSFVCFAVIGLTALTLIAR) form a helical membrane-spanning segment. Residues 163 to 167 (LARQR) are Cytoplasmic-facing.

Belongs to the DsbB family.

It localises to the cell inner membrane. Its function is as follows. Required for disulfide bond formation in some periplasmic proteins. Acts by oxidizing the DsbA protein. The protein is Disulfide bond formation protein B of Polaromonas naphthalenivorans (strain CJ2).